We begin with the raw amino-acid sequence, 156 residues long: Mitochondrial translation release factor in rescue (156 aa).

The tract at residues 44–108 (EEELEEQFVR…LREKLEVAYK (65 aa)) is GGQ domain. Positions 58-60 (GGQ) match the GGQ motif. A coiled-coil region spans residues 100–141 (REKLEVAYKGEESELLKMKKESMQKKQDKRRKVNENIEKKRR). Basic and acidic residues-rich tracts occupy residues 114–125 (LLKMKKESMQKK) and 132–156 (VNENIEKKRRFKEMLNSKQEDDKST). The segment at 114–156 (LLKMKKESMQKKQDKRRKVNENIEKKRRFKEMLNSKQEDDKST) is disordered.

The protein belongs to the prokaryotic/mitochondrial release factor family. Interacts (via C-terminus) with MTRES1 (via S4 domain). Associates with mitoribosomal S39 large subunit, peptidyl tRNA and nascent chain.

Its subcellular location is the mitochondrion. Part of a mitoribosome-associated quality control pathway that prevents aberrant translation by responding to interruptions during elongation. As heterodimer with MTRES1, ejects the unfinished nascent chain and peptidyl transfer RNA (tRNA), respectively, from stalled ribosomes. Recruitment of mitoribosome biogenesis factors to these quality control intermediates suggests additional roles for MTRES1 and MTRF during mitoribosome rescue. In Danio rerio (Zebrafish), this protein is Mitochondrial translation release factor in rescue (mtrfr).